Here is a 201-residue protein sequence, read N- to C-terminus: 3-isopropylmalate dehydratase small subunit (201 aa).

Belongs to the LeuD family. LeuD type 1 subfamily. As to quaternary structure, heterodimer of LeuC and LeuD.

It carries out the reaction (2R,3S)-3-isopropylmalate = (2S)-2-isopropylmalate. It functions in the pathway amino-acid biosynthesis; L-leucine biosynthesis; L-leucine from 3-methyl-2-oxobutanoate: step 2/4. Its function is as follows. Catalyzes the isomerization between 2-isopropylmalate and 3-isopropylmalate, via the formation of 2-isopropylmaleate. In Nitrobacter hamburgensis (strain DSM 10229 / NCIMB 13809 / X14), this protein is 3-isopropylmalate dehydratase small subunit.